A 190-amino-acid chain; its full sequence is Peptide deformylase (190 aa).

Residues cysteine 94 and histidine 136 each contribute to the Fe cation site. Glutamate 137 is an active-site residue. Histidine 140 contributes to the Fe cation binding site.

Belongs to the polypeptide deformylase family. The cofactor is Fe(2+).

It carries out the reaction N-terminal N-formyl-L-methionyl-[peptide] + H2O = N-terminal L-methionyl-[peptide] + formate. Its function is as follows. Removes the formyl group from the N-terminal Met of newly synthesized proteins. Requires at least a dipeptide for an efficient rate of reaction. N-terminal L-methionine is a prerequisite for activity but the enzyme has broad specificity at other positions. This is Peptide deformylase from Chlorobium luteolum (strain DSM 273 / BCRC 81028 / 2530) (Pelodictyon luteolum).